The chain runs to 139 residues: Peptide methionine sulfoxide reductase MsrB (139 aa).

In terms of domain architecture, MsrB spans 8–130 (DREWQRELSP…NSASLQLKTQ (123 aa)). The Zn(2+) site is built by Cys-47, Cys-50, Cys-96, and Cys-99. Cys-119 serves as the catalytic Nucleophile.

This sequence belongs to the MsrB Met sulfoxide reductase family. The cofactor is Zn(2+).

It catalyses the reaction L-methionyl-[protein] + [thioredoxin]-disulfide + H2O = L-methionyl-(R)-S-oxide-[protein] + [thioredoxin]-dithiol. This is Peptide methionine sulfoxide reductase MsrB from Acinetobacter baumannii (strain AB307-0294).